Here is a 218-residue protein sequence, read N- to C-terminus: Uracil-DNA glycosylase (218 aa).

Catalysis depends on Asp-68, which acts as the Proton acceptor.

Belongs to the uracil-DNA glycosylase (UDG) superfamily. UNG family. As to quaternary structure, homodimer. Interacts with protein OPG148. Component of the Uracil-DNA glycosylase(UDG)-OPG148-polymerase complex; OPG148 and UDG form a heterodimeric processivity factor that associates with OPG71 to form the processive polymerase holoenzyme.

It carries out the reaction Hydrolyzes single-stranded DNA or mismatched double-stranded DNA and polynucleotides, releasing free uracil.. Plays an essential role in viral replication as a component of the DNA polymerase processivity factor. Excises uracil residues from the DNA which can arise as a result of misincorporation of dUMP residues by DNA polymerase or due to deamination of cytosine. The chain is Uracil-DNA glycosylase (OPG116) from Bos taurus (Bovine).